The sequence spans 238 residues: Epoxyqueuosine reductase QueH (238 aa).

The [4Fe-4S] cluster site is built by cysteine 43, cysteine 44, cysteine 129, and cysteine 132. The cysteines at positions 211 and 213 are disulfide-linked.

This sequence belongs to the QueH family.

The enzyme catalyses epoxyqueuosine(34) in tRNA + AH2 = queuosine(34) in tRNA + A + H2O. Its pathway is tRNA modification; tRNA-queuosine biosynthesis. In terms of biological role, catalyzes the conversion of epoxyqueuosine (oQ) to queuosine (Q), which is a hypermodified base found in the wobble positions of tRNA(Asp), tRNA(Asn), tRNA(His) and tRNA(Tyr). This chain is Epoxyqueuosine reductase QueH, found in Staphylococcus epidermidis (strain ATCC 12228 / FDA PCI 1200).